A 185-amino-acid chain; its full sequence is V-type ATP synthase subunit E (185 aa).

This sequence belongs to the V-ATPase E subunit family.

Its function is as follows. Produces ATP from ADP in the presence of a proton gradient across the membrane. This is V-type ATP synthase subunit E from Deinococcus radiodurans (strain ATCC 13939 / DSM 20539 / JCM 16871 / CCUG 27074 / LMG 4051 / NBRC 15346 / NCIMB 9279 / VKM B-1422 / R1).